We begin with the raw amino-acid sequence, 291 residues long: tRNA U34 carboxymethyltransferase (291 aa).

Carboxy-S-adenosyl-L-methionine is bound by residues Lys61, Trp75, Lys80, Gly100, 122-124, 149-150, Tyr169, and Arg284; these read DPS and VE.

This sequence belongs to the class I-like SAM-binding methyltransferase superfamily. CmoB family. As to quaternary structure, homotetramer.

It carries out the reaction carboxy-S-adenosyl-L-methionine + 5-hydroxyuridine(34) in tRNA = 5-carboxymethoxyuridine(34) in tRNA + S-adenosyl-L-homocysteine + H(+). In terms of biological role, catalyzes carboxymethyl transfer from carboxy-S-adenosyl-L-methionine (Cx-SAM) to 5-hydroxyuridine (ho5U) to form 5-carboxymethoxyuridine (cmo5U) at position 34 in tRNAs. This chain is tRNA U34 carboxymethyltransferase, found in Campylobacter jejuni subsp. jejuni serotype O:2 (strain ATCC 700819 / NCTC 11168).